Consider the following 442-residue polypeptide: Probable D-serine dehydratase (442 aa).

The residue at position 111 (Lys111) is an N6-(pyridoxal phosphate)lysine.

The protein belongs to the serine/threonine dehydratase family. DsdA subfamily. Requires pyridoxal 5'-phosphate as cofactor.

It carries out the reaction D-serine = pyruvate + NH4(+). The protein is Probable D-serine dehydratase of Sinorhizobium medicae (strain WSM419) (Ensifer medicae).